A 72-amino-acid polypeptide reads, in one-letter code: Translation initiation factor IF-1 (72 aa).

Positions 1-72 constitute an S1-like domain; that stretch reads MAKEEAIEVE…TRGRIIFRER (72 aa).

The protein belongs to the IF-1 family. In terms of assembly, component of the 30S ribosomal translation pre-initiation complex which assembles on the 30S ribosome in the order IF-2 and IF-3, IF-1 and N-formylmethionyl-tRNA(fMet); mRNA recruitment can occur at any time during PIC assembly.

The protein localises to the cytoplasm. In terms of biological role, one of the essential components for the initiation of protein synthesis. Stabilizes the binding of IF-2 and IF-3 on the 30S subunit to which N-formylmethionyl-tRNA(fMet) subsequently binds. Helps modulate mRNA selection, yielding the 30S pre-initiation complex (PIC). Upon addition of the 50S ribosomal subunit IF-1, IF-2 and IF-3 are released leaving the mature 70S translation initiation complex. The protein is Translation initiation factor IF-1 of Treponema denticola (strain ATCC 35405 / DSM 14222 / CIP 103919 / JCM 8153 / KCTC 15104).